The sequence spans 102 residues: MAGKELERCQRQADQVTEIMLNNFDKVLERDGKLSELQQRSDQLLDMSSAFSKTTKTLAQQKRWENIRCRVYLGLAVAGGLLLILVVLLVIFLPSGEDSSKP.

The Cytoplasmic portion of the chain corresponds to 1–72 (MAGKELERCQ…RWENIRCRVY (72 aa)). The v-SNARE coiled-coil homology domain maps to 5–65 (ELERCQRQAD…KTLAQQKRWE (61 aa)). Residues serine 41, serine 48, and serine 49 each carry the phosphoserine modification. The chain crosses the membrane as a helical; Anchor for type IV membrane protein span at residues 73–93 (LGLAVAGGLLLILVVLLVIFL). The Vesicular segment spans residues 94–102 (PSGEDSSKP).

This sequence belongs to the synaptobrevin family.

The protein resides in the cell membrane. It is found in the endomembrane system. It localises to the golgi apparatus. The protein localises to the trans-Golgi network membrane. In terms of biological role, may participate in trafficking events that are associated with myogenesis, such as myoblast fusion and/or GLUT4 trafficking. The polypeptide is Vesicle-associated membrane protein 5 (Vamp5) (Rattus norvegicus (Rat)).